The following is a 483-amino-acid chain: Regulatory protein ViaA (483 aa).

This sequence belongs to the ViaA family. As to quaternary structure, homodimer. Interacts with RavA.

The protein resides in the cytoplasm. In terms of biological role, component of the RavA-ViaA chaperone complex, which may act on the membrane to optimize the function of some of the respiratory chains. ViaA stimulates the ATPase activity of RavA. The polypeptide is Regulatory protein ViaA (Salmonella typhi).